Reading from the N-terminus, the 155-residue chain is Regulatory protein RecX (155 aa).

Belongs to the RecX family.

It is found in the cytoplasm. Functionally, modulates RecA activity. The sequence is that of Regulatory protein RecX from Pseudomonas savastanoi pv. phaseolicola (strain 1448A / Race 6) (Pseudomonas syringae pv. phaseolicola (strain 1448A / Race 6)).